Here is a 337-residue protein sequence, read N- to C-terminus: Cytoskeleton protein RodZ (337 aa).

Over 1–111 (MNTEATHDQN…LGKRRKKRDG (111 aa)) the chain is Cytoplasmic. The HTH cro/C1-type domain maps to 19–71 (LRNAREQLGLSQQAVAERLCLKVSTVRDIEEDKAPADLASTFLRGYIRSYARL). Positions 30–49 (QQAVAERLCLKVSTVRDIEE) form a DNA-binding region, H-T-H motif. A helical; Signal-anchor for type II membrane protein transmembrane segment spans residues 112–132 (WLMTFTWLVLFVVIGLSGAWW). The Periplasmic segment spans residues 133-337 (WQDHKAQQEE…TLNAEQSPAQ (205 aa)). Over residues 145–167 (TMADQSSAELSSNSEQGQSVPLN) the composition is skewed to polar residues. Residues 145-218 (TMADQSSAEL…AVVSPSQANV (74 aa)) are disordered. Positions 168 to 207 (TSTTTDPATTSTPPASVDTTATNTQTPAVTAPAPAVDPQQ) are enriched in low complexity. Residues 208–218 (NAVVSPSQANV) are compositionally biased toward polar residues.

It belongs to the RodZ family.

The protein resides in the cell inner membrane. Its function is as follows. Cytoskeletal protein that is involved in cell-shape control through regulation of the length of the long axis. In Shigella dysenteriae serotype 1 (strain Sd197), this protein is Cytoskeleton protein RodZ.